The primary structure comprises 448 residues: Glutamate--tRNA ligase 1 (448 aa).

Residues 10-20 (PSPTGMLHVGN) carry the 'HIGH' region motif. The short motif at 240–244 (KISKR) is the 'KMSKS' region element. Residue Lys-243 coordinates ATP.

This sequence belongs to the class-I aminoacyl-tRNA synthetase family. Glutamate--tRNA ligase type 1 subfamily. Monomer.

The protein localises to the cytoplasm. It carries out the reaction tRNA(Glu) + L-glutamate + ATP = L-glutamyl-tRNA(Glu) + AMP + diphosphate. Its function is as follows. Catalyzes the attachment of glutamate to tRNA(Glu) in a two-step reaction: glutamate is first activated by ATP to form Glu-AMP and then transferred to the acceptor end of tRNA(Glu). The sequence is that of Glutamate--tRNA ligase 1 from Rickettsia typhi (strain ATCC VR-144 / Wilmington).